The primary structure comprises 1501 residues: 1-phosphatidylinositol 4,5-bisphosphate phosphodiesterase eta-2 (1501 aa).

The segment at 28 to 47 is disordered; sequence RGFSGLQGGRRRGRGEKGIP. The necessary for plasma membrane localization stretch occupies residues 75–229; sequence MPGPQPSAAS…WVTGLRYLMA (155 aa). In terms of domain architecture, PH spans 121 to 229; the sequence is SAMQEGTQMV…WVTGLRYLMA (109 aa). EF-hand domains are found at residues 243–278 and 279–315; these read TRDQ…LNVN and LPRQ…MSTR. The Ca(2+) site is built by Asp-256, Asn-258, Asp-260, Ser-262, and Glu-267. The PI-PLC X-box domain occupies 400–545; the sequence is QDMTQPLSHY…LKGKILVKGK (146 aa). Residue His-415 is part of the active site. Positions 416, 445, and 447 each coordinate Ca(2+). His-459 is an active-site residue. Glu-494 lines the Ca(2+) pocket. Residues Lys-543 and Lys-545 each contribute to the substrate site. 2 disordered regions span residues 551-570 and 609-700; these read ISED…DEME and DPND…QKKT. The segment covering 553–570 has biased composition (acidic residues); sequence EDAEEGEVSDEDSADEME. Residues Ser-561 and Ser-565 each carry the phosphoserine modification. The span at 626–638 shows a compositional bias: basic and acidic residues; that stretch reads RKAEAKKGQSKVE. The segment covering 662–673 has biased composition (basic residues); that stretch reads SKRKKKGSKIKK. Residues Ser-676 and Ser-686 each carry the phosphoserine modification. Residues 707–821 form the PI-PLC Y-box domain; that stretch reads LSDLVKYTKS…GYVLKPQCMC (115 aa). Substrate-binding residues include Ser-734 and Arg-761. The C2 domain maps to 821–950; that stretch reads CQGVFNPNSE…PGYRHVYLEG (130 aa). Residues Ile-865, Asp-867, Asp-891, Asp-920, His-921, and Asp-922 each contribute to the Ca(2+) site. Disordered stretches follow at residues 986–1073, 1089–1238, 1273–1305, and 1398–1469; these read GSLD…RLFP, EEPA…SSND, SAAR…DELQ, and GDIT…GACS. The segment covering 1089 to 1107 has biased composition (low complexity); that stretch reads EEPALGPGLPLQAAAPTGP. Composition is skewed to basic and acidic residues over residues 1142 to 1151 and 1215 to 1227; these read GGRENEEPPL and LWQR…HRDS. Low complexity predominate over residues 1421 to 1439; that stretch reads RRSSSRSQSRVRAIASRAR. Basic and acidic residues predominate over residues 1440 to 1463; it reads QAQERQQRLRGQDSRGPPEEERGT.

Ca(2+) is required as a cofactor. Specifically detected in the brain, with higher level in cerebral cortex, olfactory bulb and hippocampus (at protein level). Expressed in the pyramidal cells of the hippocampus, but also in eye and lung.

It is found in the cytoplasm. It localises to the cell membrane. It carries out the reaction a 1,2-diacyl-sn-glycero-3-phospho-(1D-myo-inositol-4,5-bisphosphate) + H2O = 1D-myo-inositol 1,4,5-trisphosphate + a 1,2-diacyl-sn-glycerol + H(+). Activity is stimulated by GNB1:GNG2. The production of the second messenger molecules diacylglycerol (DAG) and inositol 1,4,5-trisphosphate (IP3) is mediated by activated phosphatidylinositol-specific phospholipase C enzymes. This phospholipase activity is very sensitive to calcium. May be important for formation and maintenance of the neuronal network in the postnatal brain. This chain is 1-phosphatidylinositol 4,5-bisphosphate phosphodiesterase eta-2, found in Mus musculus (Mouse).